Consider the following 316-residue polypeptide: Ribosomal RNA small subunit methyltransferase H (316 aa).

Residues 35-37, Asp55, Phe79, Asp101, and Gln108 each bind S-adenosyl-L-methionine; that span reads GGH.

The protein belongs to the methyltransferase superfamily. RsmH family.

The protein localises to the cytoplasm. It carries out the reaction cytidine(1402) in 16S rRNA + S-adenosyl-L-methionine = N(4)-methylcytidine(1402) in 16S rRNA + S-adenosyl-L-homocysteine + H(+). Functionally, specifically methylates the N4 position of cytidine in position 1402 (C1402) of 16S rRNA. The sequence is that of Ribosomal RNA small subunit methyltransferase H from Vibrio proteolyticus (Aeromonas proteolytica).